Consider the following 146-residue polypeptide: Large ribosomal subunit protein uL15 (146 aa).

The interval 1-51 (MKLHELQPAPGSRKKAVRVGRGIGSGNGKTSGRGQKGQNARSGGGVRLGFE) is disordered. Gly residues-rich tracts occupy residues 21–35 (RGIG…GRGQ) and 42–51 (SGGGVRLGFE).

The protein belongs to the universal ribosomal protein uL15 family. Part of the 50S ribosomal subunit.

In terms of biological role, binds to the 23S rRNA. This Geobacillus kaustophilus (strain HTA426) protein is Large ribosomal subunit protein uL15.